The following is a 431-amino-acid chain: Glycolipid 2-alpha-mannosyltransferase 1 (431 aa).

At 1–9 (MASTRSNAR) the chain is on the cytoplasmic side. Residues 10 to 28 (LIRFGIFALVLIGCGYILT) form a helical; Signal-anchor for type II membrane protein membrane-spanning segment. Residues 29 to 431 (RGSSFQPPNY…RQKGWEKYTA (403 aa)) lie on the Lumenal side of the membrane. Positions 35-44 (PPNYQQTQSP) are enriched in polar residues. Positions 35-73 (PPNYQQTQSPAAHEKQTGNVAAGGGAGSGSAGAQVPLGK) are disordered. The span at 55 to 64 (AAGGGAGSGS) shows a compositional bias: gly residues. Glu318 acts as the Nucleophile in catalysis.

The protein belongs to the glycosyltransferase 15 family.

The protein localises to the golgi apparatus membrane. It participates in protein modification; protein glycosylation. In terms of biological role, involved in O-glycosylation of cell wall and secreted proteins. Transfers an alpha-D-mannosyl residue from GDP-mannose into lipid-linked oligosaccharide, forming an alpha-(1-&gt;2)-D-mannosyl-D-mannose linkage. Mainly responsible for the addition of the second mannose residue in an O-linked mannose pentamer. Can also substitute for MNT2 by adding the third mannose residue. Important for adherence to host surfaces and for virulence. The protein is Glycolipid 2-alpha-mannosyltransferase 1 (MNT1) of Candida albicans (strain SC5314 / ATCC MYA-2876) (Yeast).